The following is a 406-amino-acid chain: Homocysteine-responsive endoplasmic reticulum-resident ubiquitin-like domain member 2 protein (406 aa).

The Ubiquitin-like domain occupies 10 to 89; it reads VTLIIKAPNQ…HMVHLVCTSR (80 aa). The segment at 86 to 156 is disordered; the sequence is CTSRTPPSSP…PQAQTDPAQS (71 aa). Low complexity-rich tracts occupy residues 87–98 and 109–139; these read TSRTPPSSPKSS and SNSN…SSSE. Residues 145-156 show a composition bias toward polar residues; that stretch reads TLPQAQTDPAQS. A helical transmembrane segment spans residues 302-322; the sequence is FIMVMGAMLLVYLHQAGWFPF.

Its subcellular location is the membrane. Its function is as follows. Could be involved in the unfolded protein response (UPR) pathway. The polypeptide is Homocysteine-responsive endoplasmic reticulum-resident ubiquitin-like domain member 2 protein (HERPUD2) (Bos taurus (Bovine)).